We begin with the raw amino-acid sequence, 238 residues long: Large ribosomal subunit protein uL1 (238 aa).

It belongs to the universal ribosomal protein uL1 family. As to quaternary structure, part of the 50S ribosomal subunit.

In terms of biological role, binds directly to 23S rRNA. The L1 stalk is quite mobile in the ribosome, and is involved in E site tRNA release. Its function is as follows. Protein L1 is also a translational repressor protein, it controls the translation of the L11 operon by binding to its mRNA. The chain is Large ribosomal subunit protein uL1 from Rippkaea orientalis (strain PCC 8801 / RF-1) (Cyanothece sp. (strain PCC 8801)).